Reading from the N-terminus, the 825-residue chain is E3 ubiquitin-protein ligase ICP0 (825 aa).

Over residues 1–10 (MEPRPGTSSR) the composition is skewed to polar residues. Residues 1–121 (MEPRPGTSSR…VGEEEAEAGG (121 aa)) form a disordered region. Residues 46–57 (DSEEETEVGISD) show a composition bias toward acidic residues. The RING-type zinc finger occupies 126–167 (CAVCTDEIAPPLRCQSFPCLHPFCIPCMKTWIPLRNTCPLCN). Disordered regions lie at residues 221-312 (RSLS…GGGP), 325-683 (PPAA…PAPG), and 803-825 (RHPW…GHGE). Residues 242–251 (TDDEDDDLAD) are compositionally biased toward acidic residues. 3 stretches are compositionally biased toward low complexity: residues 273–283 (TRGTSQPAATR), 290–303 (PRSS…LRAG), and 350–367 (PPAR…VISD). The span at 368–379 (SPPPSPRRPAGP) shows a compositional bias: pro residues. 2 stretches are compositionally biased toward low complexity: residues 380–394 (GPLS…QVSS) and 402–439 (PQSS…DAAG). The segment covering 456–468 (RMTQAQTDTQAQS) has biased composition (polar residues). The span at 479 to 491 (GSGGPGAEGGPGV) shows a compositional bias: gly residues. Low complexity-rich tracts occupy residues 492 to 510 (PRGT…GAAA) and 519 to 540 (DSGP…PLAP). Residues 552–563 (RAPDSDSGDRGH) are compositionally biased toward basic and acidic residues. A compositionally biased stretch (low complexity) spans 567–641 (APASAGAAPP…GGSVASASGA (75 aa)). Residues 658-667 (GPRKCARKTR) are compositionally biased toward basic residues. The span at 811–825 (GAPAPAGDAPAGHGE) shows a compositional bias: low complexity.

Post-translationally, auto-ubiquitinated.

The enzyme catalyses S-ubiquitinyl-[E2 ubiquitin-conjugating enzyme]-L-cysteine + [acceptor protein]-L-lysine = [E2 ubiquitin-conjugating enzyme]-L-cysteine + N(6)-ubiquitinyl-[acceptor protein]-L-lysine.. In terms of biological role, evades nuclear antiviral defenses triggered by dsDNA viruses. Acts during the initial stages of lytic infection and the reactivation of latent viral genome. Prevents the antiviral effect of nuclear bodies by degrading host PML and SP100. Prevents antiviral response to viral DNA induced by IFI16 by degrading it. Additionally, inhibits host IRF3 nuclear signaling to prevent interferon production by the infected cells. The sequence is that of E3 ubiquitin-protein ligase ICP0 (RL2) from Homo sapiens (Human).